Reading from the N-terminus, the 273-residue chain is Rhamnulose-1-phosphate aldolase (273 aa).

Residue Glu-117 is part of the active site. His-140, His-142, and His-211 together coordinate Zn(2+).

It belongs to the aldolase class II family. RhaD subfamily. The cofactor is Zn(2+).

The protein localises to the cytoplasm. The catalysed reaction is L-rhamnulose 1-phosphate = (S)-lactaldehyde + dihydroxyacetone phosphate. Its pathway is carbohydrate degradation; L-rhamnose degradation; glycerone phosphate from L-rhamnose: step 3/3. Catalyzes the reversible cleavage of L-rhamnulose-1-phosphate to dihydroxyacetone phosphate (DHAP) and L-lactaldehyde. This Listeria innocua serovar 6a (strain ATCC BAA-680 / CLIP 11262) protein is Rhamnulose-1-phosphate aldolase.